A 354-amino-acid chain; its full sequence is Galectin-9 (354 aa).

2 Galectin domains span residues 17–147 and 226–354; these read FTGI…INFQ and FFTS…HVQT. A beta-D-galactoside contacts are provided by residues N47, H60, R64, N74, 81–87, H266, R270, T280, and 286–292; these read WGPEERK and WGPEERS.

In terms of tissue distribution, the isoform Long is expressed exclusively in the small intestine.

The protein localises to the cytoplasm. Its subcellular location is the nucleus. It localises to the secreted. In terms of biological role, binds galactosides. Has high affinity for the Forssman pentasaccharide. Ligand for HAVCR2/TIM3. Binding to HAVCR2 induces T-helper type 1 lymphocyte (Th1) death. Also stimulates bactericidal activity in infected macrophages by causing macrophage activation and IL1B secretion which restricts intracellular bacterial growth. Ligand for P4HB; the interaction retains P4HB at the cell surface of Th2 T helper cells, increasing disulfide reductase activity at the plasma membrane, altering the plasma membrane redox state and enhancing cell migration. Ligand for CD44; the interaction enhances binding of SMAD3 to the FOXP3 promoter, leading to up-regulation of FOXP3 expression and increased induced regulatory T (iTreg) cell stability and suppressive function. Promotes ability of mesenchymal stromal cells to suppress T-cell proliferation. Expands regulatory T-cells and induces cytotoxic T-cell apoptosis following virus infection. Activates ERK1/2 phosphorylation inducing cytokine (IL-6, IL-8, IL-12) and chemokine (CCL2) production in mast and dendritic cells. Inhibits degranulation and induces apoptosis of mast cells. Induces maturation and migration of dendritic cells. Inhibits natural killer (NK) cell function. Can transform NK cell phenotype from peripheral to decidual during pregnancy. Astrocyte derived galectin-9 enhances microglial TNF production. May play a role in thymocyte-epithelial interactions relevant to the biology of the thymus. May provide the molecular basis for urate flux across cell membranes, allowing urate that is formed during purine metabolism to efflux from cells and serving as an electrogenic transporter that plays an important role in renal and gastrointestinal urate excretion. Highly selective to the anion urate. This is Galectin-9 (Lgals9) from Rattus norvegicus (Rat).